The chain runs to 333 residues: Glycerol-3-phosphate dehydrogenase [NAD(P)+] (333 aa).

3 residues coordinate NADPH: tryptophan 13, lysine 33, and lysine 108. Residues lysine 108 and glycine 138 each coordinate sn-glycerol 3-phosphate. Serine 142 serves as a coordination point for NADPH. Sn-glycerol 3-phosphate-binding residues include lysine 193, aspartate 246, serine 256, arginine 257, and asparagine 258. Lysine 193 serves as the catalytic Proton acceptor. Residue arginine 257 coordinates NADPH. NADPH contacts are provided by valine 281 and glutamate 283.

This sequence belongs to the NAD-dependent glycerol-3-phosphate dehydrogenase family.

The protein resides in the cytoplasm. The enzyme catalyses sn-glycerol 3-phosphate + NAD(+) = dihydroxyacetone phosphate + NADH + H(+). It carries out the reaction sn-glycerol 3-phosphate + NADP(+) = dihydroxyacetone phosphate + NADPH + H(+). It functions in the pathway membrane lipid metabolism; glycerophospholipid metabolism. Its function is as follows. Catalyzes the reduction of the glycolytic intermediate dihydroxyacetone phosphate (DHAP) to sn-glycerol 3-phosphate (G3P), the key precursor for phospholipid synthesis. This is Glycerol-3-phosphate dehydrogenase [NAD(P)+] from Bifidobacterium longum (strain NCC 2705).